The primary structure comprises 1105 residues: Pheromone-regulated membrane protein 10 (1105 aa).

Polar residues predominate over residues 1 to 11; that stretch reads MSDNRPTYDTS. 6 disordered regions span residues 1–22, 36–55, 65–123, 151–278, 385–473, and 520–656; these read MSDN…NHFH, RKQN…TASN, GSNH…FYGD, IKPK…GGGL, AGAS…FLRG, and EQKS…LRHK. Low complexity predominate over residues 67–82; it reads NHKFGNSINNNNNNAN. The segment covering 85 to 106 has biased composition (polar residues); that stretch reads LGSSSAGTNRRSLISPTSSTHV. Residues 162-178 show a composition bias toward acidic residues; the sequence is DSSDDDGNNLDEVEDET. The segment covering 185–197 has biased composition (polar residues); it reads LNQNHPPQQYYET. The span at 198–210 shows a compositional bias: acidic residues; it reads DSSDEDEEDDDEV. Residues 390-413 are compositionally biased toward polar residues; that stretch reads LDHSQQSSAAPSTEITPSQSPNQH. Over residues 417–439 the composition is skewed to low complexity; that stretch reads EKSNNNENNQQSTTVESSSSTSS. The segment covering 446 to 459 has biased composition (basic and acidic residues); sequence LARRRASEERKKAE. 3 stretches are compositionally biased toward polar residues: residues 520-539, 592-606, and 624-633; these read EQKS…GTAL, RTNT…NSEE, and MNANLPSFQN. Helical transmembrane passes span 782–802, 809–829, 835–855, 860–880, 903–923, 938–958, 963–983, 986–1006, 1015–1035, and 1075–1095; these read PPWL…PFAF, LPIS…VSSI, SVFE…IGSI, LFCF…GYII, VIYS…YGWI, AIDE…LGLI, WSQV…SFFA, HFST…GVLG, GMAV…GIAS, and VEVS…IYPF.

Belongs to the ThrE exporter (TC 2.A.79) family.

Its subcellular location is the membrane. The chain is Pheromone-regulated membrane protein 10 (PRM10) from Candida albicans (strain SC5314 / ATCC MYA-2876) (Yeast).